The following is a 73-amino-acid chain: UPF0346 protein lp_1865 (73 aa).

The protein belongs to the UPF0346 family.

This Lactiplantibacillus plantarum (strain ATCC BAA-793 / NCIMB 8826 / WCFS1) (Lactobacillus plantarum) protein is UPF0346 protein lp_1865.